A 296-amino-acid chain; its full sequence is Phosphatidylglycerol--prolipoprotein diacylglyceryl transferase (296 aa).

3 helical membrane-spanning segments follow: residues 17–37 (LAVRWYGLMYLVGFIFAIVVG), 59–79 (MMFYGVLGVVLGGRLGYVLFY), and 97–117 (GGMSFHGGFLGVTLAMALFAW). Arg-142 is an a 1,2-diacyl-sn-glycero-3-phospho-(1'-sn-glycerol) binding site. 2 consecutive transmembrane segments (helical) span residues 230 to 250 (MGAISALFLIGYGAARFTVEF) and 265 to 285 (LSMGQWLSLPMIVAGVLMMIW).

It belongs to the Lgt family.

Its subcellular location is the cell inner membrane. It catalyses the reaction L-cysteinyl-[prolipoprotein] + a 1,2-diacyl-sn-glycero-3-phospho-(1'-sn-glycerol) = an S-1,2-diacyl-sn-glyceryl-L-cysteinyl-[prolipoprotein] + sn-glycerol 1-phosphate + H(+). The protein operates within protein modification; lipoprotein biosynthesis (diacylglyceryl transfer). Its function is as follows. Catalyzes the transfer of the diacylglyceryl group from phosphatidylglycerol to the sulfhydryl group of the N-terminal cysteine of a prolipoprotein, the first step in the formation of mature lipoproteins. This Burkholderia pseudomallei (strain 668) protein is Phosphatidylglycerol--prolipoprotein diacylglyceryl transferase.